Here is a 232-residue protein sequence, read N- to C-terminus: MSACQTPVIVALDFPTREAALRLADQLDPKLCRVKVGKELFTSCAADIVETLRHRGFEVFLDLKFHDIPNTTAMAVKAAAEMGVWMVNVHCSGGLRMMAACREVLEQRTGPQPLLIGVTVLTSMEREDLAGIGLDIDPQVQVLRLAALAGKAGMDGLVCSALEAQALKAAHPSLQLVTPGIRPAGSAQDDQRRILTPRQALDAGSDYLVIGRPISQAADPAKALAAVVAELA.

Substrate contacts are provided by residues Asp13, Lys35, 62–71, Thr122, Arg182, Gln191, Gly211, and Arg212; that span reads DLKFHDIPNT. Lys64 acts as the Proton donor in catalysis.

It belongs to the OMP decarboxylase family. Type 1 subfamily. Homodimer.

It catalyses the reaction orotidine 5'-phosphate + H(+) = UMP + CO2. It functions in the pathway pyrimidine metabolism; UMP biosynthesis via de novo pathway; UMP from orotate: step 2/2. In terms of biological role, catalyzes the decarboxylation of orotidine 5'-monophosphate (OMP) to uridine 5'-monophosphate (UMP). The sequence is that of Orotidine 5'-phosphate decarboxylase from Pseudomonas syringae pv. syringae (strain B728a).